The following is a 203-amino-acid chain: Dephospho-CoA kinase (203 aa).

The DPCK domain occupies 3-201 (SVGLTGGIGS…QRYLECAAAA (199 aa)). 11–16 (GSGKTT) is an ATP binding site.

This sequence belongs to the CoaE family.

Its subcellular location is the cytoplasm. The catalysed reaction is 3'-dephospho-CoA + ATP = ADP + CoA + H(+). Its pathway is cofactor biosynthesis; coenzyme A biosynthesis; CoA from (R)-pantothenate: step 5/5. In terms of biological role, catalyzes the phosphorylation of the 3'-hydroxyl group of dephosphocoenzyme A to form coenzyme A. The polypeptide is Dephospho-CoA kinase (Burkholderia pseudomallei (strain 1710b)).